Here is a 647-residue protein sequence, read N- to C-terminus: Protein INVOLVED IN DE NOVO 2 (647 aa).

2 disordered regions span residues 1–20 (MGST…SESE) and 101–123 (SASE…DCDH). Positions 9–20 (SDDEDSDISESE) are enriched in acidic residues. Positions 253 to 508 (IAELTEEEAR…NIMKEWNTNI (256 aa)) form a coiled coil.

Interacts with FMD1/IDNL1. Forms a complex with FMD1/IDNL1 and FMD2/INDL2. Can form homodimers. Interacts with MORC6.

Functionally, forms a complex with FDM1/IDNL1 and FDM2/IDNL2 that is required for RNA-directed DNA methylation (RdDM) and that functions at a downstream step of the RdDM pathway and downstream of small interfering RNA (siRNA) formation. Required for de novo DNA methylation, siRNA accumulation and siRNA-mediated maintenance methylation. Required for several post-transcriptional gene silencing pathways. Binds double-stranded RNAs (dsRNAs) with 5'-overhangs through its XS domain. Binds long non-coding RNA (lncRNA) in an AGO4-dependent manner and associates with DRM2, resulting in DNA methylation of RdDM target loci. Mediates the silencing of a subset of MORC6 target loci. The chain is Protein INVOLVED IN DE NOVO 2 from Arabidopsis thaliana (Mouse-ear cress).